The following is a 437-amino-acid chain: Methylenetetrahydrofolate--tRNA-(uracil-5-)-methyltransferase TrmFO (437 aa).

10-15 (GAGLAG) contributes to the FAD binding site.

It belongs to the MnmG family. TrmFO subfamily. The cofactor is FAD.

The protein localises to the cytoplasm. The catalysed reaction is uridine(54) in tRNA + (6R)-5,10-methylene-5,6,7,8-tetrahydrofolate + NADH + H(+) = 5-methyluridine(54) in tRNA + (6S)-5,6,7,8-tetrahydrofolate + NAD(+). It catalyses the reaction uridine(54) in tRNA + (6R)-5,10-methylene-5,6,7,8-tetrahydrofolate + NADPH + H(+) = 5-methyluridine(54) in tRNA + (6S)-5,6,7,8-tetrahydrofolate + NADP(+). Functionally, catalyzes the folate-dependent formation of 5-methyl-uridine at position 54 (M-5-U54) in all tRNAs. The sequence is that of Methylenetetrahydrofolate--tRNA-(uracil-5-)-methyltransferase TrmFO from Brevibacillus brevis (strain 47 / JCM 6285 / NBRC 100599).